The primary structure comprises 339 residues: Fe-S cluster assembly protein DRE2 (339 aa).

Positions 1–157 are N-terminal SAM-like domain; that stretch reads MTRILLLLHP…KKLSSTHAAV (157 aa). The tract at residues 158-206 is linker; the sequence is GLTDTSASNTDEENDDVNSKRKLQETKLAYFSESDDEDEEDQIIDENNL. The [2Fe-2S] cluster site is built by cysteine 221, cysteine 233, cysteine 236, and cysteine 238. Positions 221 to 238 are fe-S binding site A; sequence CELPNGKKRRKACKDCTC. The [4Fe-4S] cluster site is built by cysteine 302, cysteine 305, cysteine 313, and cysteine 316. Short sequence motifs (cx2C motif) lie at residues 302-305 and 313-316; these read CSSC and CDGC. The fe-S binding site B stretch occupies residues 302-316; sequence CSSCSLGDAFRCDGC.

The protein belongs to the anamorsin family. In terms of assembly, monomer. Interacts with TAH18. Interacts with MIA40. Requires [2Fe-2S] cluster as cofactor. The cofactor is [4Fe-4S] cluster.

The protein resides in the cytoplasm. Its subcellular location is the mitochondrion intermembrane space. In terms of biological role, component of the cytosolic iron-sulfur (Fe-S) protein assembly (CIA) machinery required for the maturation of extramitochondrial Fe-S proteins. Part of an electron transfer chain functioning in an early step of cytosolic Fe-S biogenesis, facilitating the de novo assembly of a [4Fe-4S] cluster on the scaffold complex CFD1-NBP35. Electrons are transferred to DRE2 from NADPH via the FAD- and FMN-containing protein TAH18. TAH18-DRE2 are also required for the assembly of the diferric tyrosyl radical cofactor of ribonucleotide reductase (RNR), probably by providing electrons for reduction during radical cofactor maturation in the catalytic small subunit RNR2. This is Fe-S cluster assembly protein DRE2 from Debaryomyces hansenii (strain ATCC 36239 / CBS 767 / BCRC 21394 / JCM 1990 / NBRC 0083 / IGC 2968) (Yeast).